A 312-amino-acid chain; its full sequence is Pantothenate kinase (312 aa).

92-99 (GSVAVGKS) is an ATP binding site.

Belongs to the prokaryotic pantothenate kinase family.

The protein localises to the cytoplasm. The enzyme catalyses (R)-pantothenate + ATP = (R)-4'-phosphopantothenate + ADP + H(+). It functions in the pathway cofactor biosynthesis; coenzyme A biosynthesis; CoA from (R)-pantothenate: step 1/5. This Vibrio cholerae serotype O1 (strain ATCC 39315 / El Tor Inaba N16961) protein is Pantothenate kinase (coaA).